We begin with the raw amino-acid sequence, 95 residues long: U8-barytoxin-Tl1a (95 aa).

The signal sequence occupies residues 1–21; that stretch reads MKTLVLVAVLGLASLYLLSYA. Residues 22-50 constitute a propeptide that is removed on maturation; that stretch reads SEVQQLSVAEEEFGALIDAFGGLLETEER. Intrachain disulfides connect C57/C71, C64/C76, and C70/C86.

This sequence belongs to the neurotoxin 10 (Hwtx-1) family. 26 (ICK-1) subfamily. As to expression, expressed by the venom gland.

The protein resides in the secreted. Its function is as follows. Ion channel inhibitor. This Trittame loki (Brush-footed trapdoor spider) protein is U8-barytoxin-Tl1a.